We begin with the raw amino-acid sequence, 449 residues long: Hyaluronidase (449 aa).

An N-terminal signal peptide occupies residues 1 to 23 (MYHIWIKFLAAWIFLKRFNGVHV). Intrachain disulfides connect Cys47–Cys340 and Cys211–Cys227. 3 N-linked (GlcNAc...) asparagine glycosylation sites follow: Asn67, Asn103, and Asn111. The active-site Proton donor is Glu135. Asn153 carries an N-linked (GlcNAc...) asparagine glycan. Asn357 carries an N-linked (GlcNAc...) asparagine glycan. Disulfide bonds link Cys365-Cys376, Cys370-Cys427, and Cys429-Cys438. N-linked (GlcNAc...) asparagine glycosylation is present at Asn401. The region spanning 427-438 (CQCYQGWKGLYC) is the EGF-like domain.

It belongs to the glycosyl hydrolase 56 family. Monomer. In terms of tissue distribution, expressed by the venom gland.

The protein resides in the secreted. It catalyses the reaction Random hydrolysis of (1-&gt;4)-linkages between N-acetyl-beta-D-glucosamine and D-glucuronate residues in hyaluronate.. Snake venom endo-hyaluronidase that degrades hyaluronan to smaller oligosaccharide fragments. In venom, it is not toxic by itself, but increases the diffusion of other venom proteins by degrading the extracellular matrix. In addition, it displays antiedematogenic activity. In Echis pyramidum leakeyi (Leakey's carpet viper), this protein is Hyaluronidase.